The chain runs to 359 residues: MFDKLQAAEDRYEEISHKLSDPDVINNQDEYKKYMKECSDLEEIVQKYREYTKVTKEIEEARELLEQTLDKDFREMVQQEFQEAQEKLEVIKRQLKILIVPKDPNDDKNVIVEIRGGAGGEEAALFAGVLFRAMAKYAEKKRWKYEILDSNPTELGGFKEVVFTIEGKGAYSRLKFESGVHRVQRVPSTESSGRIHTSTITVAVLPEVEEVDVDINPSDLRIDTYRASGAGGQHINKTDSAIRITHMPTGIVVSCQDERSQHKNKDKAMKILRSKLYEIAQEQQINEVAQDRKNQVGTGDRSERIRTYNYPQGRVTDHRINLTLYKLEQVLDGDLDELIDALITTDQSEKLGSGSDDEG.

Q233 carries the post-translational modification N5-methylglutamine.

It belongs to the prokaryotic/mitochondrial release factor family. Post-translationally, methylated by PrmC. Methylation increases the termination efficiency of RF1.

Its subcellular location is the cytoplasm. In terms of biological role, peptide chain release factor 1 directs the termination of translation in response to the peptide chain termination codons UAG and UAA. This is Peptide chain release factor 1 from Ruminiclostridium cellulolyticum (strain ATCC 35319 / DSM 5812 / JCM 6584 / H10) (Clostridium cellulolyticum).